The sequence spans 78 residues: HssA/B-like protein 30 (78 aa).

The interval 1 to 32 is disordered; sequence MTLFSSITSISKTNTSSKSSVNSLSGSSLSMG.

The protein belongs to the hssA/B family.

This chain is HssA/B-like protein 30 (hssl30), found in Dictyostelium discoideum (Social amoeba).